Consider the following 526-residue polypeptide: Protein spinster homolog 1 (526 aa).

The tract at residues 1–43 (MTSRSSQGDAAPFLTQADNTEEEGAPDPGGHSSDEEEEEGKDH) is disordered. Helical transmembrane passes span 48 to 68 (HLLT…LFYI), 98 to 118 (GLVQ…FGYL), 126 to 146 (LIMC…SFVS), 159 to 179 (LVGV…ADLF), 187 to 207 (MLSF…IAGS), 218 to 238 (WALR…IFVA), 272 to 292 (FILS…LALW), 321 to 341 (MIFG…GVEI), 355 to 375 (LVCA…LAFA), 385 to 405 (FIFI…DILL), 419 to 439 (LQIV…IGVI), and 463 to 483 (MICA…ALFI).

It belongs to the major facilitator superfamily. Spinster (TC 2.A.1.49) family.

It is found in the lysosome membrane. The enzyme catalyses a 1-acyl-sn-glycero-3-phosphocholine(out) + H(+)(out) = a 1-acyl-sn-glycero-3-phosphocholine(in) + H(+)(in). It catalyses the reaction a 1-acyl-sn-glycero-3-phosphoethanolamine(out) + H(+)(out) = a 1-acyl-sn-glycero-3-phosphoethanolamine(in) + H(+)(in). It carries out the reaction a 1-O-(1Z-alkenyl)-sn-glycero-3-phosphocholine(out) + H(+)(out) = a 1-O-(1Z-alkenyl)-sn-glycero-3-phosphocholine(in) + H(+)(in). The catalysed reaction is a 1-O-(1Z-alkenyl)-sn-glycero-3-phosphoethanolamine(out) + H(+)(out) = a 1-O-(1Z-alkenyl)-sn-glycero-3-phosphoethanolamine(in) + H(+)(in). Mediates the rate-limiting, proton-dependent, lysosomal efflux of lysophospholipids. Selective for zwitterionic headgroups such as lysophosphatidylcholine (LPC) and lysophosphatidylethanolamine (LPE). Essential player in lysosomal homeostasis. The sequence is that of Protein spinster homolog 1 (spns1) from Xenopus tropicalis (Western clawed frog).